The chain runs to 372 residues: MAFQGCDCFGLLVWLLLLQTRLGKARMVPGTPSLSPLPSENGLDDSGVNPQERPLTGMPETSLPRKPGDSTRPLDSMAFTPGQSFSTMSLSRQPFPTWVPPTSACGHRTARIVGGRPAPARKWPWQVSLQVHKQHICGGSLISKWWVITAAHCVYGHLDYAVFMGDADLWSKRPVRIPVQDIIVHQDFSMMRTVVHDIALVLLAFPVNYSVNIQPVCIPEKSFLVQPGTLCWVTGWGKVLEQGRSSRILQEIELNIIRHEKCNQILKDIMGNIFTLVQEGGVCGYNEKGGDACQGDSGGPLVCEFNKTWVQVGIVSWGLGCGRIGYPGVYTEVSYYRDWIIKELSRASCWKLSGFLVLSVCLVLHLAIVVAL.

A signal peptide spans M1–A25. Topologically, residues R26–K351 are extracellular. The segment at T31–R72 is disordered. Residues I112–S345 enclose the Peptidase S1 domain. Cysteines 137 and 153 form a disulfide. Catalysis depends on charge relay system residues H152 and D197. A glycan (N-linked (GlcNAc...) asparagine) is linked at N208. 3 cysteine pairs are disulfide-bonded: C231–C303, C262–C283, and C293–C321. The active-site Charge relay system is the S297. Residues L352–L372 form a helical membrane-spanning segment.

Belongs to the peptidase S1 family. As to expression, testis-specific. Expressed by primary and secondary spermatocytes.

Its subcellular location is the membrane. The protein localises to the cytoplasm. Lacks protease activity in vitro. This chain is Serine protease 44, found in Mus musculus (Mouse).